The chain runs to 358 residues: Cinnamyl alcohol dehydrogenase 1 (358 aa).

The 329-residue stretch at 21-349 (GILTPYTYTL…KNDVRYRFVV (329 aa)) folds into the Enoyl reductase (ER) domain. Cys-48 serves as a coordination point for Zn(2+). Ser-50 provides a ligand contact to NADP(+). The Zn(2+) site is built by His-70, Glu-71, Cys-101, Cys-104, Cys-107, Cys-115, and Cys-164. NADP(+) contacts are provided by residues Thr-168, 189 to 194 (GLGGVG), 212 to 217 (SSSDKK), Thr-252, Gly-276, and 299 to 301 (SFV).

This sequence belongs to the zinc-containing alcohol dehydrogenase family. In terms of assembly, homodimer. Zn(2+) is required as a cofactor.

The enzyme catalyses (E)-cinnamyl alcohol + NADP(+) = (E)-cinnamaldehyde + NADPH + H(+). It catalyses the reaction (E)-coniferol + NADP(+) = (E)-coniferaldehyde + NADPH + H(+). The catalysed reaction is (E)-sinapyl alcohol + NADP(+) = (E)-sinapaldehyde + NADPH + H(+). It carries out the reaction (E)-4-coumaroyl alcohol + NADP(+) = (E)-4-coumaraldehyde + NADPH + H(+). It participates in aromatic compound metabolism; phenylpropanoid biosynthesis. Functionally, involved in lignin biosynthesis. Catalyzes the final step specific for the production of lignin monomers. Catalyzes the NADPH-dependent reduction of coniferaldehyde, 5-hydroxyconiferaldehyde, sinapaldehyde, 4-coumaraldehyde and caffeyl aldehyde to their respective alcohols. Can use coumaraldehyde and, with a lower efficiency, coniferaldehyde and sinapaldehyde as substrates. The polypeptide is Cinnamyl alcohol dehydrogenase 1 (Medicago truncatula (Barrel medic)).